A 416-amino-acid polypeptide reads, in one-letter code: Enterobactin exporter EntS (416 aa).

Residues 1–21 (MNKQSWLLNLSLLKTHPAFRA) are Cytoplasmic-facing. A helical transmembrane segment spans residues 22–42 (VFLARFISIVSLGLLGVAVPV). At 43 to 55 (QIQMMTHSTWQVG) the chain is on the periplasmic side. Residues 56–76 (LSVTLTGGAMFVGLMVGGVLA) form a helical membrane-spanning segment. At 77–83 (DRYERKK) the chain is on the cytoplasmic side. The chain crosses the membrane as a helical span at residues 84–104 (VILLARGTCGIGFIGLCLNAL). Residues 105-109 (LPEPS) are Periplasmic-facing. Residues 110–130 (LLAIYLLGLWDGFFASLGVTA) form a helical membrane-spanning segment. Residues 131–156 (LLAATPALVGRENLMQAGAITMLTVR) are Cytoplasmic-facing. The chain crosses the membrane as a helical span at residues 157-177 (LGSVISPMIGGLLLATGGVAW). Residue N178 is a topological domain, periplasmic. A helical transmembrane segment spans residues 179 to 199 (YGLAAAGTFITLLPLLSLPAL). The Cytoplasmic portion of the chain corresponds to 200–218 (PPPPQPREHPLKSLLAGFR). Residues 219–239 (FLLASPLVGGIALLGGLLTMA) form a helical membrane-spanning segment. Residues 240 to 256 (SAVRVLYPALADNWQMS) are Periplasmic-facing. Residues 257-277 (AAQIGFLYAAIPLGAAIGALT) traverse the membrane as a helical segment. Topologically, residues 278-287 (SGKLAHSVRP) are cytoplasmic. A helical transmembrane segment spans residues 288 to 307 (GLLMLLSTLGAFLAIGLFGL). The Periplasmic portion of the chain corresponds to 308-313 (MPMWIL). Residues 314 to 336 (GVVCLALFGWLSAVSSLLQYTML) traverse the membrane as a helical segment. Residues 337-356 (QTQTPEAMLGRINGLWTAQN) lie on the Cytoplasmic side of the membrane. The helical transmembrane segment at 357 to 377 (VTGDAIGAALLGGLGAMMTPV) threads the bilayer. Residue A378 is a topological domain, periplasmic. Residues 379 to 399 (SASASGFGLLIIGVLLLLVLV) traverse the membrane as a helical segment. The Cytoplasmic portion of the chain corresponds to 400–416 (ELRRFRQTPPQVTASGS).

It belongs to the major facilitator superfamily. EntS (TC 2.A.1.38) family.

Its subcellular location is the cell inner membrane. Functionally, component of an export pathway for enterobactin. The polypeptide is Enterobactin exporter EntS (Escherichia coli O6:K15:H31 (strain 536 / UPEC)).